The chain runs to 640 residues: Chaperone protein DnaK (640 aa).

Thr-201 carries the phosphothreonine; by autocatalysis modification. Low complexity predominate over residues 603–621; the sequence is AASADQGGAPGADAGNAGK. The interval 603 to 625 is disordered; that stretch reads AASADQGGAPGADAGNAGKAQDD.

The protein belongs to the heat shock protein 70 family.

Acts as a chaperone. In Stenotrophomonas maltophilia (strain K279a), this protein is Chaperone protein DnaK.